The chain runs to 145 residues: MPKISLIGKDLAKEGIEFVFAGPLPTCSDCRVKNVCFNLEQGHKYRVTKVREQLNPCIIFNGDKVNTVEVEELEDFFIIQESKKLQEGAIVTMKSMNCDYITCPNIEKCNLYYQKNDLKVAIKSIGQNVNCPKGFKMKKVQVTYK.

It belongs to the UPF0179 family.

This is UPF0179 protein TV1250 from Thermoplasma volcanium (strain ATCC 51530 / DSM 4299 / JCM 9571 / NBRC 15438 / GSS1).